Consider the following 336-residue polypeptide: uncharacterized protein (336 aa).

NADP(+) is bound by residues Lys39 and Tyr166.

The protein belongs to the NAD(P)-dependent epimerase/dehydratase family. Dihydroflavonol-4-reductase subfamily.

It localises to the cytoplasm. It is found in the nucleus. This is an uncharacterized protein from Schizosaccharomyces pombe (strain 972 / ATCC 24843) (Fission yeast).